A 598-amino-acid chain; its full sequence is Elongation factor 4 (598 aa).

Positions 5–187 (ANIRNFSIIA…ALVEFIPAPT (183 aa)) constitute a tr-type G domain. Residues 17 to 22 (DHGKST) and 134 to 137 (NKID) contribute to the GTP site.

The protein belongs to the TRAFAC class translation factor GTPase superfamily. Classic translation factor GTPase family. LepA subfamily.

The protein resides in the cell inner membrane. The enzyme catalyses GTP + H2O = GDP + phosphate + H(+). Required for accurate and efficient protein synthesis under certain stress conditions. May act as a fidelity factor of the translation reaction, by catalyzing a one-codon backward translocation of tRNAs on improperly translocated ribosomes. Back-translocation proceeds from a post-translocation (POST) complex to a pre-translocation (PRE) complex, thus giving elongation factor G a second chance to translocate the tRNAs correctly. Binds to ribosomes in a GTP-dependent manner. The chain is Elongation factor 4 from Psychrobacter cryohalolentis (strain ATCC BAA-1226 / DSM 17306 / VKM B-2378 / K5).